Consider the following 407-residue polypeptide: Putative serine/threonine-protein kinase C01C4.3 (407 aa).

Positions 33–57 (NQLQNHPPRNATQSPQRQPRTSESS) are enriched in polar residues. Residues 33-68 (NQLQNHPPRNATQSPQRQPRTSESSMDFPRSALRRN) form a disordered region. A Protein kinase domain is found at 126–397 (YTVNKQLGTG…RKCLAKEKLL (272 aa)). ATP contacts are provided by residues 132–140 (LGTGRFGFI) and Lys155. Asn251 functions as the Proton acceptor in the catalytic mechanism.

This sequence belongs to the protein kinase superfamily. Ser/Thr protein kinase family.

The catalysed reaction is L-seryl-[protein] + ATP = O-phospho-L-seryl-[protein] + ADP + H(+). It carries out the reaction L-threonyl-[protein] + ATP = O-phospho-L-threonyl-[protein] + ADP + H(+). The polypeptide is Putative serine/threonine-protein kinase C01C4.3 (Caenorhabditis elegans).